A 297-amino-acid polypeptide reads, in one-letter code: Acetaldehyde dehydrogenase (297 aa).

Cysteine 128 functions as the Acyl-thioester intermediate in the catalytic mechanism. NAD(+) contacts are provided by residues serine 159–asparagine 167 and asparagine 272.

It belongs to the acetaldehyde dehydrogenase family.

The catalysed reaction is acetaldehyde + NAD(+) + CoA = acetyl-CoA + NADH + H(+). The protein is Acetaldehyde dehydrogenase of Desulfitobacterium hafniense (strain DSM 10664 / DCB-2).